The following is a 212-amino-acid chain: Imidazole glycerol phosphate synthase subunit HisH (212 aa).

The Glutamine amidotransferase type-1 domain maps to 1–212 (MLAILDYKAG…YEYCKEVSDA (212 aa)). Cys-79 (nucleophile) is an active-site residue. Catalysis depends on residues His-187 and Glu-189.

As to quaternary structure, heterodimer of HisH and HisF.

The protein resides in the cytoplasm. It carries out the reaction 5-[(5-phospho-1-deoxy-D-ribulos-1-ylimino)methylamino]-1-(5-phospho-beta-D-ribosyl)imidazole-4-carboxamide + L-glutamine = D-erythro-1-(imidazol-4-yl)glycerol 3-phosphate + 5-amino-1-(5-phospho-beta-D-ribosyl)imidazole-4-carboxamide + L-glutamate + H(+). The enzyme catalyses L-glutamine + H2O = L-glutamate + NH4(+). The protein operates within amino-acid biosynthesis; L-histidine biosynthesis; L-histidine from 5-phospho-alpha-D-ribose 1-diphosphate: step 5/9. IGPS catalyzes the conversion of PRFAR and glutamine to IGP, AICAR and glutamate. The HisH subunit catalyzes the hydrolysis of glutamine to glutamate and ammonia as part of the synthesis of IGP and AICAR. The resulting ammonia molecule is channeled to the active site of HisF. The chain is Imidazole glycerol phosphate synthase subunit HisH from Maridesulfovibrio salexigens (strain ATCC 14822 / DSM 2638 / NCIMB 8403 / VKM B-1763) (Desulfovibrio salexigens).